The following is a 256-amino-acid chain: Triosephosphate isomerase (256 aa).

9–11 contacts substrate; sequence NWK. Residue H97 is the Electrophile of the active site. Catalysis depends on E169, which acts as the Proton acceptor. Substrate is bound by residues G175, S214, and 235–236; that span reads GG.

This sequence belongs to the triosephosphate isomerase family. Homodimer.

The protein resides in the cytoplasm. It carries out the reaction D-glyceraldehyde 3-phosphate = dihydroxyacetone phosphate. It participates in carbohydrate biosynthesis; gluconeogenesis. It functions in the pathway carbohydrate degradation; glycolysis; D-glyceraldehyde 3-phosphate from glycerone phosphate: step 1/1. In terms of biological role, involved in the gluconeogenesis. Catalyzes stereospecifically the conversion of dihydroxyacetone phosphate (DHAP) to D-glyceraldehyde-3-phosphate (G3P). This Aliivibrio fischeri (strain ATCC 700601 / ES114) (Vibrio fischeri) protein is Triosephosphate isomerase.